We begin with the raw amino-acid sequence, 135 residues long: Thyrostimulin beta-5 subunit (135 aa).

The N-terminal stretch at 1–19 (MVMPLVLSLALTPPPLCHA) is a signal peptide. Disulfide bonds link cysteine 30–cysteine 87, cysteine 54–cysteine 102, cysteine 63–cysteine 118, cysteine 67–cysteine 120, and cysteine 123–cysteine 130.

It belongs to the glycoprotein hormones subunit beta family. In terms of assembly, heterodimer with GPHA2; non-covalently-linked. As to expression, expressed by the venom duct.

It is found in the secreted. The sequence is that of Thyrostimulin beta-5 subunit from Conus victoriae (Queen Victoria cone).